The sequence spans 160 residues: 6,7-dimethyl-8-ribityllumazine synthase (160 aa).

5-amino-6-(D-ribitylamino)uracil contacts are provided by residues Trp-26, 59–61, and 81–83; these read AVE and VVI. 86–87 serves as a coordination point for (2S)-2-hydroxy-3-oxobutyl phosphate; sequence GT. The active-site Proton donor is His-89. Phe-114 contributes to the 5-amino-6-(D-ribitylamino)uracil binding site. A (2S)-2-hydroxy-3-oxobutyl phosphate-binding site is contributed by Arg-128.

Belongs to the DMRL synthase family.

The catalysed reaction is (2S)-2-hydroxy-3-oxobutyl phosphate + 5-amino-6-(D-ribitylamino)uracil = 6,7-dimethyl-8-(1-D-ribityl)lumazine + phosphate + 2 H2O + H(+). It functions in the pathway cofactor biosynthesis; riboflavin biosynthesis; riboflavin from 2-hydroxy-3-oxobutyl phosphate and 5-amino-6-(D-ribitylamino)uracil: step 1/2. Its function is as follows. Catalyzes the formation of 6,7-dimethyl-8-ribityllumazine by condensation of 5-amino-6-(D-ribitylamino)uracil with 3,4-dihydroxy-2-butanone 4-phosphate. This is the penultimate step in the biosynthesis of riboflavin. This chain is 6,7-dimethyl-8-ribityllumazine synthase, found in Frankia casuarinae (strain DSM 45818 / CECT 9043 / HFP020203 / CcI3).